The sequence spans 160 residues: RTX-II toxin-activating lysine-acyltransferase ApxIIC (160 aa).

Catalysis depends on residues His23 and Asp92.

Belongs to the RTX toxin acyltransferase family. Homodimer.

Its subcellular location is the cytoplasm. It carries out the reaction a fatty acyl-[ACP] + L-lysyl-[protein] = N(6)-(fatty acyl)-L-lysyl-[protein] + holo-[ACP] + H(+). Its function is as follows. Protein-lysine acyltransferase that catalyzes fatty acylation of the protoxin, thereby converting it to the active toxin. In Actinobacillus pleuropneumoniae (Haemophilus pleuropneumoniae), this protein is RTX-II toxin-activating lysine-acyltransferase ApxIIC (apxIIC).